A 325-amino-acid polypeptide reads, in one-letter code: Probable arylamine N-acetyltransferase 1 (325 aa).

The active-site Acyl-thioester intermediate is the Cys-72. Active-site residues include His-112 and Asp-127.

Belongs to the arylamine N-acetyltransferase family.

It carries out the reaction an arylamine + acetyl-CoA = an N-acetylarylamine + CoA. This chain is Probable arylamine N-acetyltransferase 1, found in Dictyostelium discoideum (Social amoeba).